A 161-amino-acid chain; its full sequence is Allophycocyanin alpha chain (161 aa).

N71 bears the N4-methylasparagine mark. A (2R,3E)-phycocyanobilin-binding site is contributed by C81.

Belongs to the phycobiliprotein family. Heterodimer of an alpha and a beta chain. In terms of processing, contains one covalently linked phycocyanobilin chromophore.

Its subcellular location is the cellular thylakoid membrane. In terms of biological role, light-harvesting photosynthetic bile pigment-protein from the phycobiliprotein complex. Allophycocyanin has a maximum absorption at approximately 650 nanometers. The protein is Allophycocyanin alpha chain (apcA) of Synechocystis sp. (strain PCC 6714) (Aphanocapsa sp. (strain PCC 6714)).